The following is a 2904-amino-acid chain: Highly reducing polyketide synthase bet1 (2904 aa).

Residues 8 to 441 (NEPIAIVGSG…GTNAHAIVES (434 aa)) form the Ketosynthase family 3 (KS3) domain. Residues cysteine 181, histidine 320, and histidine 361 each act as for beta-ketoacyl synthase activity in the active site. Residues 553-875 (VFTGQGAQYA…PYHGTLLRGG (323 aa)) are acyl transferase (AT) domain. An N-terminal hotdog fold region spans residues 948–1081 (HQLLGDVSPD…GELKVVLVDE (134 aa)). Positions 948–1257 (HQLLGDVSPD…FKPVGSDASN (310 aa)) constitute a PKS/mFAS DH domain. Positions 971-1255 (PREMTWLEGH…VKFKPVGSDA (285 aa)) are dehydratase (DH) domain. Histidine 980 acts as the Proton acceptor; for dehydratase activity in catalysis. The segment at 1098–1257 (MIPVQPSRLY…FKPVGSDASN (160 aa)) is C-terminal hotdog fold. Aspartate 1159 functions as the Proton donor; for dehydratase activity in the catalytic mechanism. A methyltransferase (cMeT) domain region spans residues 1411–1596 (KQSTLWVASI…GFSGIDTMSP (186 aa)). A ketoreductase (KR)domain region spans residues 2125-2298 (TYWLVGLSGA…RSSVVNVGAI (174 aa)). In terms of domain architecture, Carrier spans 2407 to 2486 (EVANVIKQAY…SLVELAAESI (80 aa)). The residue at position 2445 (serine 2445) is an O-(pantetheine 4'-phosphoryl)serine. The disordered stretch occupies residues 2492–2543 (PGVPQANANPNGPSSPDSDATESSNQNSDVDVTSTRATSPSTPAATSPDSNV). Over residues 2497-2523 (ANANPNGPSSPDSDATESSNQNSDVDV) the composition is skewed to polar residues. Low complexity predominate over residues 2524-2541 (TSTRATSPSTPAATSPDS). The reductase (R) domain stretch occupies residues 2585–2817 (LTGCSGLLGH…DLVSVETCCE (233 aa)).

The cofactor is pantetheine 4'-phosphate.

It catalyses the reaction 7 malonyl-CoA + acetyl-CoA + 10 AH2 + 5 S-adenosyl-L-methionine + 2 H(+) = dehydroprobetaenone I + 10 A + 5 S-adenosyl-L-homocysteine + 7 CO2 + 8 CoA + 6 H2O. It functions in the pathway mycotoxin biosynthesis. Highly reducing polyketide synthase; part of the gene cluster that mediates the biosynthesis of betaenones, phytotoxic polyketides involved in leaf spot disease in sugar beets. The first step of the pathway is the synthesis of dehydroprobetaenone I by the polyketide synthase bet1 and the enoyl reductase bet3 via condensation of one acetyl-CoA starter unit with 7 malonyl-CoA units and 5 methylations. The C-terminal reductase (R) domain of bet1 catalyzes the reductive release of the polyketide chain. Because bet1 lacks a designated enoylreductase (ER) domain, the required activity is provided the enoyl reductase bet3. The short-chain dehydrogenase/reductase bet4 then catalyzes reduction of dehydroprobetaenone I to probetaenone I. The cytochrome P450 monooxygenase bet2 catalyzes successive epoxidation, oxidation (resulting from epoxide opening) and hydroxylation to install a tertiary alcohol in the decaline ring to yield betaenone C from dehydroprobetaenone I and betaenone B from probetaenone I. The FAD-linked oxidoreductase (orf1) is probably responsible for the conversion of betaenone C to betaenone A via an intramolecular aldol reaction between C-1 and C-17 to form the bridged tricyclic system in betaenone A. This is Highly reducing polyketide synthase bet1 from Neocamarosporium betae (Beet black rot fungus).